The chain runs to 1588 residues: Pentafunctional AROM polypeptide (1588 aa).

The segment at 1-392 (MVQLAKVPIL…YGDSAQFVSD (392 aa)) is 3-dehydroquinate synthase. Residues 43–45 (DTN), 78–81 (ETSK), 109–111 (GGV), and aspartate 114 contribute to the NAD(+) site. Arginine 125 lines the 7-phospho-2-dehydro-3-deoxy-D-arabino-heptonate pocket. Residue 134–135 (TS) participates in NAD(+) binding. 2 residues coordinate 7-phospho-2-dehydro-3-deoxy-D-arabino-heptonate: aspartate 141 and lysine 147. Lysine 156 provides a ligand contact to NAD(+). A 7-phospho-2-dehydro-3-deoxy-D-arabino-heptonate-binding site is contributed by asparagine 157. Residues 174–177 (WLET) and asparagine 185 contribute to the NAD(+) site. Glutamate 189 contributes to the Zn(2+) binding site. 7-phospho-2-dehydro-3-deoxy-D-arabino-heptonate-binding positions include 189 to 192 (EVIK) and lysine 258. Residue glutamate 268 is the Proton acceptor; for 3-dehydroquinate synthase activity of the active site. Residues 272–276 (RNLLN) and histidine 279 each bind 7-phospho-2-dehydro-3-deoxy-D-arabino-heptonate. Residue histidine 279 coordinates Zn(2+). The Proton acceptor; for 3-dehydroquinate synthase activity role is filled by histidine 283. Residues histidine 295 and lysine 364 each contribute to the 7-phospho-2-dehydro-3-deoxy-D-arabino-heptonate site. Histidine 295 provides a ligand contact to Zn(2+). The tract at residues 405–871 (VYPFKDIPAD…WDVLHSELGA (467 aa)) is EPSP synthase. The For EPSP synthase activity role is filled by cysteine 853. Residues 890 to 1080 (SVVIIGMRAA…IPSGRSAFVC (191 aa)) are shikimate kinase. Residue 895–902 (GMRAAGKT) participates in ATP binding. The segment at 1081-1293 (LTFDDLTEQT…AAPGQLTVAQ (213 aa)) is 3-dehydroquinase. The active-site Proton acceptor; for 3-dehydroquinate dehydratase activity is histidine 1198. Lysine 1227 serves as the catalytic Schiff-base intermediate with substrate; for 3-dehydroquinate dehydratase activity. Positions 1306–1588 (PKELFVVGKP…KAIFDAVTKE (283 aa)) are shikimate dehydrogenase.

In the N-terminal section; belongs to the sugar phosphate cyclases superfamily. Dehydroquinate synthase family. It in the 2nd section; belongs to the EPSP synthase family. This sequence in the 3rd section; belongs to the shikimate kinase family. The protein in the 4th section; belongs to the type-I 3-dehydroquinase family. In the C-terminal section; belongs to the shikimate dehydrogenase family. In terms of assembly, homodimer. Requires Zn(2+) as cofactor.

It is found in the cytoplasm. It carries out the reaction 7-phospho-2-dehydro-3-deoxy-D-arabino-heptonate = 3-dehydroquinate + phosphate. The enzyme catalyses 3-dehydroquinate = 3-dehydroshikimate + H2O. The catalysed reaction is shikimate + NADP(+) = 3-dehydroshikimate + NADPH + H(+). It catalyses the reaction shikimate + ATP = 3-phosphoshikimate + ADP + H(+). It carries out the reaction 3-phosphoshikimate + phosphoenolpyruvate = 5-O-(1-carboxyvinyl)-3-phosphoshikimate + phosphate. The protein operates within metabolic intermediate biosynthesis; chorismate biosynthesis; chorismate from D-erythrose 4-phosphate and phosphoenolpyruvate: step 2/7. It functions in the pathway metabolic intermediate biosynthesis; chorismate biosynthesis; chorismate from D-erythrose 4-phosphate and phosphoenolpyruvate: step 3/7. Its pathway is metabolic intermediate biosynthesis; chorismate biosynthesis; chorismate from D-erythrose 4-phosphate and phosphoenolpyruvate: step 4/7. It participates in metabolic intermediate biosynthesis; chorismate biosynthesis; chorismate from D-erythrose 4-phosphate and phosphoenolpyruvate: step 5/7. The protein operates within metabolic intermediate biosynthesis; chorismate biosynthesis; chorismate from D-erythrose 4-phosphate and phosphoenolpyruvate: step 6/7. Functionally, the AROM polypeptide catalyzes 5 consecutive enzymatic reactions in prechorismate polyaromatic amino acid biosynthesis. This chain is Pentafunctional AROM polypeptide, found in Saccharomyces cerevisiae (strain Lalvin EC1118 / Prise de mousse) (Baker's yeast).